The sequence spans 446 residues: UPF0597 protein DvMF_1488 (446 aa).

Belongs to the UPF0597 family.

This Nitratidesulfovibrio vulgaris (strain DSM 19637 / Miyazaki F) (Desulfovibrio vulgaris) protein is UPF0597 protein DvMF_1488.